A 240-amino-acid polypeptide reads, in one-letter code: Ubiquinone biosynthesis O-methyltransferase (240 aa).

Positions 36, 66, 87, and 129 each coordinate S-adenosyl-L-methionine.

The protein belongs to the methyltransferase superfamily. UbiG/COQ3 family.

The catalysed reaction is a 3-demethylubiquinol + S-adenosyl-L-methionine = a ubiquinol + S-adenosyl-L-homocysteine + H(+). It catalyses the reaction a 3-(all-trans-polyprenyl)benzene-1,2-diol + S-adenosyl-L-methionine = a 2-methoxy-6-(all-trans-polyprenyl)phenol + S-adenosyl-L-homocysteine + H(+). It participates in cofactor biosynthesis; ubiquinone biosynthesis. O-methyltransferase that catalyzes the 2 O-methylation steps in the ubiquinone biosynthetic pathway. This chain is Ubiquinone biosynthesis O-methyltransferase, found in Pelagibacter ubique (strain HTCC1062).